The primary structure comprises 188 residues: MGGTFDPIHQGHLVAASEVADRFGLDEVIFVPTGQPWQKADEPVSPAEDRYLMTVIATASNPRFQVSRVDIDRGGPTYTIHTLRDLRAEYGAKVQLFFITGADALAKILSWKDLDEVFELAHFIGVTRPGFRLSDAHLPADTVSLVQVPAMAISSTDCRARVSRGEPLWYLVPDGVVQYIAKRRLYQK.

Belongs to the NadD family.

It carries out the reaction nicotinate beta-D-ribonucleotide + ATP + H(+) = deamido-NAD(+) + diphosphate. It participates in cofactor biosynthesis; NAD(+) biosynthesis; deamido-NAD(+) from nicotinate D-ribonucleotide: step 1/1. Catalyzes the reversible adenylation of nicotinate mononucleotide (NaMN) to nicotinic acid adenine dinucleotide (NaAD). This chain is Probable nicotinate-nucleotide adenylyltransferase, found in Salinispora arenicola (strain CNS-205).